Consider the following 465-residue polypeptide: Putrescine aminotransferase (465 aa).

Pyridoxal 5'-phosphate-binding positions include 150 to 151 and glutamine 274; that span reads GT. Lysine 300 bears the N6-(pyridoxal phosphate)lysine mark. Threonine 332 serves as a coordination point for pyridoxal 5'-phosphate.

The protein belongs to the class-III pyridoxal-phosphate-dependent aminotransferase family. Putrescine aminotransferase subfamily. Pyridoxal 5'-phosphate serves as cofactor.

It carries out the reaction an alkane-alpha,omega-diamine + 2-oxoglutarate = an omega-aminoaldehyde + L-glutamate. It catalyses the reaction putrescine + 2-oxoglutarate = 1-pyrroline + L-glutamate + H2O. The enzyme catalyses cadaverine + 2-oxoglutarate = 5-aminopentanal + L-glutamate. Its pathway is amine and polyamine degradation; putrescine degradation; 4-aminobutanal from putrescine (transaminase route): step 1/1. Catalyzes the aminotransferase reaction from putrescine to 2-oxoglutarate, leading to glutamate and 4-aminobutanal, which spontaneously cyclizes to form 1-pyrroline. This is the first step in one of two pathways for putrescine degradation, where putrescine is converted into 4-aminobutanoate (gamma-aminobutyrate or GABA) via 4-aminobutanal. Also functions as a cadaverine transaminase in a a L-lysine degradation pathway to succinate that proceeds via cadaverine, glutarate and L-2-hydroxyglutarate. This is Putrescine aminotransferase from Cronobacter sakazakii (strain ATCC BAA-894) (Enterobacter sakazakii).